The primary structure comprises 333 residues: Forkhead box protein unc-130 (333 aa).

Residues 1-126 (MLFSMESILS…MSGHRKSSHA (126 aa)) are disordered. A compositionally biased stretch (basic and acidic residues) spans 14 to 24 (PKLEPPPKLEP). The span at 37-50 (RSNTRLSEPSTSAS) shows a compositional bias: polar residues. Over residues 52–62 (LEHDLKFGESR) the composition is skewed to basic and acidic residues. Positions 98–110 (SSDDAKDDDDDDD) are enriched in acidic residues. The segment at residues 127-221 (KPPYSYIALI…DNGSFLRRRK (95 aa)) is a DNA-binding region (fork-head). The tract at residues 304 to 333 (APVSSGQKRTSSSSSPNENGSSAVSDKLSA) is disordered. The span at 307–333 (SSGQKRTSSSSSPNENGSSAVSDKLSA) shows a compositional bias: low complexity.

As to expression, expressed in ventral body wall muscle. Expressed in the structural cells and two neurons of each ray in the male tail.

Its subcellular location is the nucleus. Probable transcription factor. Binds to DNA sequence motif 5'-CTGTTTCA-3'. Required for the migration of distal tip cells (DTC) and axonal growth-cones along the dorsal-ventral axis of the body wall, acting by cell autonomous repression of unc-129/TGF-beta expression in ventral body muscle during embyogenesis. Binds to the promoter region of the unc-129 gene. Plays a role in dorsal-ventral patterning and fate specification of the postembryonic mesoderm. Involved in male tail morphogenesis and in embryogenesis. Plays a role in the development of sensory neurons and is required to repress AWA fate and promote ASG fate in the ASG chemosensory neurons. Regulates expression of a class of small RNAs, known as 21U-RNAs. The polypeptide is Forkhead box protein unc-130 (Caenorhabditis elegans).